We begin with the raw amino-acid sequence, 423 residues long: Calcium up-regulated protein A (423 aa).

Positions 1–19 (MINIEDISKSSNESEEKQL) are enriched in basic and acidic residues. The disordered stretch occupies residues 1-27 (MINIEDISKSSNESEEKQLKSTSTSSK). 2 consecutive Ricin B-type lectin domains span residues 27 to 147 (KPKY…WTTF) and 118 to 251 (QGNG…WGIN).

It belongs to the cup family.

The protein localises to the cytoplasm. Its subcellular location is the membrane. Functionally, may play an important role in stabilizing and/or regulating the cell membrane during Ca(2+) stress or certain stages of development. The chain is Calcium up-regulated protein A (cupA) from Dictyostelium discoideum (Social amoeba).